A 348-amino-acid chain; its full sequence is MNGTEGPNFYVPFSNATGVVRSPFEYPQYYLAEPWQFSMLAAYMFMLIVLGFPINFLTLYVTVQHKKLRTPLNYILLNLAVADLFMVFGGFTTTLYTSLHGYFVFGPTGCNLEGFFATLGGEIALWSLVVLAIERYVVVCKPMSNFRFGENHAIMGLVFTWIMALACAAPPLVGWSRYIPEGMQCSCGIDYYTLKPEVNNESFVIYMFVVHFFIPLFVIFFCYGQLVFTVKEAAAQQQESATTQKAEKEVTRMVIIMVIAFLICWLPYAGVAFYIFTHQGSNFGPIFMTLPAFFAKTASIYNPVIYIMMNKQFRTCMITTLCCGKNPLGDDEASTTASKTETSQVAPA.

Met1 carries the post-translational modification N-acetylmethionine. Topologically, residues 1-36 (MNGTEGPNFYVPFSNATGVVRSPFEYPQYYLAEPWQ) are extracellular. 2 N-linked (GlcNAc...) asparagine glycosylation sites follow: Asn2 and Asn15. Residues 37–61 (FSMLAAYMFMLIVLGFPINFLTLYV) traverse the membrane as a helical segment. Residues 62-73 (TVQHKKLRTPLN) are Cytoplasmic-facing. Residues 74 to 96 (YILLNLAVADLFMVFGGFTTTLY) form a helical membrane-spanning segment. The Extracellular segment spans residues 97 to 110 (TSLHGYFVFGPTGC). Cysteines 110 and 187 form a disulfide. Residues 111–133 (NLEGFFATLGGEIALWSLVVLAI) form a helical membrane-spanning segment. Residues 134-136 (ERY) carry the 'Ionic lock' involved in activated form stabilization motif. Topologically, residues 134–152 (ERYVVVCKPMSNFRFGENH) are cytoplasmic. Residues 153–173 (AIMGLVFTWIMALACAAPPLV) form a helical membrane-spanning segment. Residues 174–202 (GWSRYIPEGMQCSCGIDYYTLKPEVNNES) are Extracellular-facing. Glu201 provides a ligand contact to Zn(2+). Residues 203–224 (FVIYMFVVHFFIPLFVIFFCYG) form a helical membrane-spanning segment. Over 225-252 (QLVFTVKEAAAQQQESATTQKAEKEVTR) the chain is Cytoplasmic. The chain crosses the membrane as a helical span at residues 253–274 (MVIIMVIAFLICWLPYAGVAFY). Residues 275-286 (IFTHQGSNFGPI) are Extracellular-facing. Gln279 provides a ligand contact to Zn(2+). The helical transmembrane segment at 287–308 (FMTLPAFFAKTASIYNPVIYIM) threads the bilayer. Lys296 carries the N6-(retinylidene)lysine modification. Topologically, residues 309–348 (MNKQFRTCMITTLCCGKNPLGDDEASTTASKTETSQVAPA) are cytoplasmic. 2 S-palmitoyl cysteine lipidation sites follow: Cys322 and Cys323. The interaction with SAG stretch occupies residues 330-348 (DDEASTTASKTETSQVAPA). Ser334 carries the phosphoserine modification. Phosphothreonine occurs at positions 335 and 336. Phosphoserine is present on Ser338. 2 positions are modified to phosphothreonine: Thr340 and Thr342. Residue Ser343 is modified to Phosphoserine.

The protein belongs to the G-protein coupled receptor 1 family. Opsin subfamily. Homodimer. May form a complex composed of RHO, GRK1 and RCVRN in a Ca(2+)-dependent manner; RCVRN prevents the interaction between GRK1 and RHO. Interacts with GRK1. Interacts (phosphorylated form) with SAG. Interacts with GNAT1. Interacts with GNAT3. SAG and G-proteins compete for a common binding site. Interacts with PRCD; the interaction promotes PRCD stability. Forms a complex with ASAP1 and ARF4. Forms a complex with ASAP1, RAB11A, Rabin8/RAB3IP, ARF4 and RAB11FIP3; the complex regulates Golgi-to-cilia rhodopsin/RHO transport in photoreceptors. Post-translationally, phosphorylated on some or all of the serine and threonine residues present in the C-terminal region. In terms of processing, contains one covalently linked retinal chromophore. Upon light absorption, the covalently bound 11-cis-retinal is converted to all-trans-retinal. After hydrolysis of the Schiff base and release of the covalently bound all-trans-retinal, active rhodopsin is regenerated by binding of a fresh molecule of 11-cis-retinal.

It is found in the membrane. Its subcellular location is the cell projection. The protein resides in the cilium. The protein localises to the photoreceptor outer segment. Functionally, photoreceptor required for image-forming vision at low light intensity. Required for photoreceptor cell viability after birth. Light-induced isomerization of 11-cis to all-trans retinal triggers a conformational change that activates signaling via G-proteins. Subsequent receptor phosphorylation mediates displacement of the bound G-protein alpha subunit by the arrestin SAG and terminates signaling. The chain is Rhodopsin (RHO) from Otolemur crassicaudatus (Brown greater galago).